The chain runs to 348 residues: Dihydroorotase (348 aa).

Zn(2+)-binding residues include His14 and His16. Substrate is bound by residues 16-18 (HLR) and Asn42. Residues Lys100, His137, and His175 each contribute to the Zn(2+) site. Position 100 is an N6-carboxylysine (Lys100). Position 137 (His137) interacts with substrate. Substrate is bound at residue Leu220. Asp248 is a binding site for Zn(2+). Asp248 is a catalytic residue. The substrate site is built by His252 and Ala264.

It belongs to the metallo-dependent hydrolases superfamily. DHOase family. Class II DHOase subfamily. Homodimer. Requires Zn(2+) as cofactor.

The catalysed reaction is (S)-dihydroorotate + H2O = N-carbamoyl-L-aspartate + H(+). It participates in pyrimidine metabolism; UMP biosynthesis via de novo pathway; (S)-dihydroorotate from bicarbonate: step 3/3. Functionally, catalyzes the reversible cyclization of carbamoyl aspartate to dihydroorotate. The polypeptide is Dihydroorotase (Pseudomonas fluorescens (strain ATCC BAA-477 / NRRL B-23932 / Pf-5)).